Reading from the N-terminus, the 825-residue chain is MTKKQENETSKELGMDNKKTSGKSGKLKISVSAIRKGEKKTEGKRSNARRRANNHSNDHSKRRRPAAQDLLKDLKQKQRADEARLDQESKAAKQEYKKSLNKAEASESKPVVKKVESVEKPAETAAEAPKVRGPKILKPSPARLKQNQANSEKPAAKPSSSRRPSSRPSFTEAPMPENKEGRRRKSGKPGRKGQNSYADQGRGANSNRSEQRKRKNKKHQSAPQVKKQVTQRKDRPLPESFEYEVGMNAQDLGKILHREPAEIVKKLFMLGIMINQNRSLDKDTIELLAADYGIEAVEKVHEDISDIDNIFAQEMEESKNSENQVVRPPVVTIMGHVDHGKTTLLDRLRHTRVSEHEAGGITQNIGAYQVRINDRLITFLDTPGHAAFSSMRARGAEITDIVVLIVAADDGVMPQTIEAIDHAKSAGVPIIVAINKMDRPGANPAHVTEQLMQYELIPENYGGSTIFVNISAKTGMGIDELLENIILEADMLELKADPKQKAIGTVVEARLSRGKGPVADVLIQQGTLRVGDPIVVGDTFGRVRTMTNDKGHQVKKATPSMPVEITGLNDVPESADKLVVFADEKTARAVGEARAQQSLQKQRENVQHVTLDNLFDTMKRESMKSVDIVLKADVQGSAEALAQSFQKIDVEGVRVNIIHSGVGAINESDVTLASASNALIIGFNVRPTATAKSQAAQEGVDIRLYSIIYKAIDDVKAAMQGMLEPTYEEKVIGNLTVRETWKVSKIGTIAGAFVDNGYVTRESGIRVIRDGVVKYDGKVASLRRFKDDVKEVKAGFDCGLTIENFNDIKEGDELEAYEMQEVKPG.

Basic and acidic residues-rich tracts occupy residues 1-19 (MTKK…DNKK), 35-45 (RKGEKKTEGKR), 70-98 (LLKD…EYKK), and 113-122 (KKVESVEKPA). A disordered region spans residues 1–239 (MTKKQENETS…TQRKDRPLPE (239 aa)). A compositionally biased stretch (low complexity) spans 158 to 169 (PSSSRRPSSRPS). The segment covering 181-191 (GRRRKSGKPGR) has biased composition (basic residues). Positions 194–208 (QNSYADQGRGANSNR) are enriched in polar residues. Positions 211–220 (QRKRKNKKHQ) are enriched in basic residues. The tr-type G domain maps to 326-495 (VRPPVVTIMG…ILEADMLELK (170 aa)). The segment at 335–342 (GHVDHGKT) is G1. A GTP-binding site is contributed by 335-342 (GHVDHGKT). The tract at residues 360 to 364 (GITQN) is G2. The segment at 381-384 (DTPG) is G3. Residues 381-385 (DTPGH) and 435-438 (NKMD) each bind GTP. The interval 435-438 (NKMD) is G4. Residues 471-473 (SAK) form a G5 region.

Belongs to the TRAFAC class translation factor GTPase superfamily. Classic translation factor GTPase family. IF-2 subfamily.

It is found in the cytoplasm. One of the essential components for the initiation of protein synthesis. Protects formylmethionyl-tRNA from spontaneous hydrolysis and promotes its binding to the 30S ribosomal subunits. Also involved in the hydrolysis of GTP during the formation of the 70S ribosomal complex. This is Translation initiation factor IF-2 from Lactobacillus delbrueckii subsp. bulgaricus (strain ATCC BAA-365 / Lb-18).